We begin with the raw amino-acid sequence, 389 residues long: Probable acyl-CoA dehydrogenase fadE25 (389 aa).

This sequence belongs to the acyl-CoA dehydrogenase family. It depends on FAD as a cofactor.

The enzyme catalyses a 2,3-saturated acyl-CoA + A = a 2,3-dehydroacyl-CoA + AH2. This is Probable acyl-CoA dehydrogenase fadE25 (fadE25) from Mycobacterium leprae (strain TN).